A 360-amino-acid chain; its full sequence is Phosphoserine aminotransferase (360 aa).

L-glutamate is bound at residue R41. Pyridoxal 5'-phosphate-binding positions include 75-76, W99, T152, D171, and Q194; that span reads AS. An N6-(pyridoxal phosphate)lysine modification is found at K195. 236-237 provides a ligand contact to pyridoxal 5'-phosphate; the sequence is NT.

This sequence belongs to the class-V pyridoxal-phosphate-dependent aminotransferase family. SerC subfamily. As to quaternary structure, homodimer. Pyridoxal 5'-phosphate is required as a cofactor.

It localises to the cytoplasm. It carries out the reaction O-phospho-L-serine + 2-oxoglutarate = 3-phosphooxypyruvate + L-glutamate. The catalysed reaction is 4-(phosphooxy)-L-threonine + 2-oxoglutarate = (R)-3-hydroxy-2-oxo-4-phosphooxybutanoate + L-glutamate. Its pathway is amino-acid biosynthesis; L-serine biosynthesis; L-serine from 3-phospho-D-glycerate: step 2/3. It participates in cofactor biosynthesis; pyridoxine 5'-phosphate biosynthesis; pyridoxine 5'-phosphate from D-erythrose 4-phosphate: step 3/5. In terms of biological role, catalyzes the reversible conversion of 3-phosphohydroxypyruvate to phosphoserine and of 3-hydroxy-2-oxo-4-phosphonooxybutanoate to phosphohydroxythreonine. The chain is Phosphoserine aminotransferase from Porphyromonas gingivalis (strain ATCC 33277 / DSM 20709 / CIP 103683 / JCM 12257 / NCTC 11834 / 2561).